A 307-amino-acid chain; its full sequence is Protease HtpX homolog (307 aa).

Transmembrane regions (helical) follow at residues 10–30 (VITILAGIGIALLFSLIAYGL) and 40–60 (ISIIYFLLIFVLFIDIIQWLV). H144 contacts Zn(2+). E145 is a catalytic residue. H148 serves as a coordination point for Zn(2+). Transmembrane regions (helical) follow at residues 156–176 (LLLAIGLIPTLIFYLGYSMIF) and 187–207 (FFLVAIILFILSSVFNIMILG). A Zn(2+)-binding site is contributed by E213.

It belongs to the peptidase M48B family. It depends on Zn(2+) as a cofactor.

The protein localises to the cell membrane. This is Protease HtpX homolog from Picrophilus torridus (strain ATCC 700027 / DSM 9790 / JCM 10055 / NBRC 100828 / KAW 2/3).